We begin with the raw amino-acid sequence, 258 residues long: NAD kinase (258 aa).

The active-site Proton acceptor is the D51. NAD(+) contacts are provided by residues 51-52 (DG), 119-120 (ND), K130, D149, 160-165 (TAYSLS), and A184.

Belongs to the NAD kinase family. Homodimer. Requires a divalent metal cation as cofactor.

It localises to the cytoplasm. It catalyses the reaction NAD(+) + ATP = ADP + NADP(+) + H(+). Involved in the regulation of the intracellular balance between NAD(H) and NADP(H), and is a key enzyme in the biosynthesis of NADP. Catalyzes specifically the phosphorylation on 2'-hydroxyl of the adenosine moiety of NAD to yield NADP. This is NAD kinase (NADK) from Thermotoga maritima (strain ATCC 43589 / DSM 3109 / JCM 10099 / NBRC 100826 / MSB8).